We begin with the raw amino-acid sequence, 277 residues long: Large ribosomal subunit protein uL2 (277 aa).

The interval 219–277 (TVRGSVMNPNDHPHGGGEGKAPVGRKAPSTPWGKPALGLKTRNKKAKSDKLIVRRRNEK) is disordered. Positions 264 to 277 (AKSDKLIVRRRNEK) are enriched in basic and acidic residues.

This sequence belongs to the universal ribosomal protein uL2 family. As to quaternary structure, part of the 50S ribosomal subunit. Forms a bridge to the 30S subunit in the 70S ribosome.

Its function is as follows. One of the primary rRNA binding proteins. Required for association of the 30S and 50S subunits to form the 70S ribosome, for tRNA binding and peptide bond formation. It has been suggested to have peptidyltransferase activity; this is somewhat controversial. Makes several contacts with the 16S rRNA in the 70S ribosome. The sequence is that of Large ribosomal subunit protein uL2 from Streptococcus pyogenes serotype M1.